A 272-amino-acid chain; its full sequence is Secretagogin (272 aa).

6 consecutive EF-hand domains span residues 8–43, 53–89, 101–136, 145–180, 193–228, and 237–272; these read LDAA…MLKK, ERVQ…QEEN, DNSV…LFLQ, KLDE…QENF, ERKR…MMEL, and DLDK…KHKP. 5 residues coordinate Ca(2+): Asp21, Asp23, Asn25, Tyr27, and Glu32. Asp114, Asp116, Ser118, Tyr120, Glu125, Asp158, Asn160, Asp162, Arg164, Asp169, Asp206, Ser208, Thr210, Glu217, Asp250, Asn252, Asp254, Lys256, and Glu261 together coordinate Ca(2+).

The protein resides in the cytoplasm. In Danio rerio (Zebrafish), this protein is Secretagogin (scgn).